The following is a 286-amino-acid chain: Putative inorganic pyrophosphatase C3A12.02 (286 aa).

Diphosphate is bound at residue R85. Mg(2+) is bound by residues D122, D127, and D159.

Belongs to the PPase family. It depends on Mg(2+) as a cofactor.

The protein localises to the cytoplasm. The catalysed reaction is diphosphate + H2O = 2 phosphate + H(+). The polypeptide is Putative inorganic pyrophosphatase C3A12.02 (Schizosaccharomyces pombe (strain 972 / ATCC 24843) (Fission yeast)).